We begin with the raw amino-acid sequence, 280 residues long: MGIEFKNVSYTYQAGTPFEGRALFDVNLKIEDASYTAFIGHTGSGKSTIMQLLNGLHIPTKGEVIVDDFSIKAGDKNKEIKFIRQKVGLVFQFPESQLFEETVLKDVAFGPQNFGISQIEAERLAEEKLRLVGISEDLFDKNPFELSGGQMRRVAIAGILAMEPKVLVLDEPTAGLDPKGRKELMTLFKNLHKKGMTIVLVTHLMDDVADYADYVYVLEAGKVTLSGQPKQIFQEVELLESKQLGVPKITKFAQRLSHKGLNLPSLPITINEFVEAIKHG.

Residues 3 to 245 form the ABC transporter domain; that stretch reads IEFKNVSYTY…VELLESKQLG (243 aa). 40–47 provides a ligand contact to ATP; the sequence is GHTGSGKS.

Belongs to the ABC transporter superfamily. Energy-coupling factor EcfA family. In terms of assembly, forms a stable energy-coupling factor (ECF) transporter complex composed of 2 membrane-embedded substrate-binding proteins (S component), 2 ATP-binding proteins (A component) and 2 transmembrane proteins (T component).

It localises to the cell membrane. ATP-binding (A) component of a common energy-coupling factor (ECF) ABC-transporter complex. Unlike classic ABC transporters this ECF transporter provides the energy necessary to transport a number of different substrates. The protein is Energy-coupling factor transporter ATP-binding protein EcfA2 of Streptococcus agalactiae serotype Ia (strain ATCC 27591 / A909 / CDC SS700).